The chain runs to 115 residues: MPIRIFSKEGLRERGASGKNEQKKKKKEKIRRSMKNLCRFVESYKDFTLYGYRFHSKIKHKFCVLSSSFPVLFFCHPLSPLKSNFIDRFTLDSHASQATWTLYMVVIVLFLSYRN.

The segment at 9-30 (EGLRERGASGKNEQKKKKKEKI) is disordered.

This is an uncharacterized protein from Saccharomyces cerevisiae (strain ATCC 204508 / S288c) (Baker's yeast).